Here is a 459-residue protein sequence, read N- to C-terminus: Palmitoyltransferase PFA4 (459 aa).

Topologically, residues 1 to 9 are cytoplasmic; it reads MAARNWSRV. Residues 10 to 30 form a helical membrane-spanning segment; sequence WVGGTVILISFIAFSSQIFVI. At 31-37 the chain is on the lumenal side; it reads WPWYGRE. Residues 38–58 traverse the membrane as a helical segment; it reads ISLDLLKLLVPLNLAAFMIFW. The Cytoplasmic segment spans residues 59–138; that stretch reads NYRLCVITSP…GNCVGFYNQG (80 aa). The 51-residue stretch at 95-145 folds into the DHHC domain; the sequence is RYCKNCEHYKPPRAHHCRQCKTCWLKLDHHCPWIGNCVGFYNQGHFIRFLL. Cys125 acts as the S-palmitoyl cysteine intermediate in catalysis. The helical transmembrane segment at 139-159 threads the bilayer; that stretch reads HFIRFLLWVDIGTTFHLIIMV. At 160-177 the chain is on the lumenal side; sequence RRVLYIAEYYHQEPTLAD. The chain crosses the membrane as a helical span at residues 178 to 198; that stretch reads VLFLVFNFATCVPVWLCVGMF. Residues 199–459 lie on the Cytoplasmic side of the membrane; it reads SIYHVYLACG…DTEEESGYAH (261 aa). Positions 278 to 379 are disordered; that stretch reads HTTQYFWPPQ…DYDHYDEGPM (102 aa). Pro residues predominate over residues 286-299; sequence PQDPSRLPNPPPIP. Polar residues predominate over residues 310–322; sequence NGFNPNLQPTNSL. Residues 331–356 show a composition bias toward basic and acidic residues; it reads HIDEDEHSHERDQYRHYSSGEERDND.

It belongs to the DHHC palmitoyltransferase family. PFA4 subfamily.

It localises to the endoplasmic reticulum membrane. It catalyses the reaction L-cysteinyl-[protein] + hexadecanoyl-CoA = S-hexadecanoyl-L-cysteinyl-[protein] + CoA. Functionally, mediates the reversible addition of palmitate to target proteins, thereby regulating their membrane association and biological function. This Cryptococcus neoformans var. neoformans serotype D (strain B-3501A) (Filobasidiella neoformans) protein is Palmitoyltransferase PFA4.